A 360-amino-acid polypeptide reads, in one-letter code: Peptide chain release factor 1 (360 aa).

Q236 carries the N5-methylglutamine modification.

The protein belongs to the prokaryotic/mitochondrial release factor family. Methylated by PrmC. Methylation increases the termination efficiency of RF1.

The protein resides in the cytoplasm. In terms of biological role, peptide chain release factor 1 directs the termination of translation in response to the peptide chain termination codons UAG and UAA. This is Peptide chain release factor 1 from Lactiplantibacillus plantarum (strain ATCC BAA-793 / NCIMB 8826 / WCFS1) (Lactobacillus plantarum).